The sequence spans 741 residues: DNA ligase (741 aa).

Residues 78–82 (DADYD), 127–128 (SL), and glutamate 161 contribute to the NAD(+) site. The active-site N6-AMP-lysine intermediate is lysine 163. NAD(+) contacts are provided by arginine 184, glutamate 219, lysine 335, and lysine 359. Residues cysteine 464, cysteine 467, cysteine 482, and cysteine 488 each coordinate Zn(2+). The 80-residue stretch at 662 to 741 (VGDSPVAGKT…DAWRVLAGLA (80 aa)) folds into the BRCT domain.

This sequence belongs to the NAD-dependent DNA ligase family. LigA subfamily. The cofactor is Mg(2+). Requires Mn(2+) as cofactor.

It carries out the reaction NAD(+) + (deoxyribonucleotide)n-3'-hydroxyl + 5'-phospho-(deoxyribonucleotide)m = (deoxyribonucleotide)n+m + AMP + beta-nicotinamide D-nucleotide.. Functionally, DNA ligase that catalyzes the formation of phosphodiester linkages between 5'-phosphoryl and 3'-hydroxyl groups in double-stranded DNA using NAD as a coenzyme and as the energy source for the reaction. It is essential for DNA replication and repair of damaged DNA. The sequence is that of DNA ligase from Dinoroseobacter shibae (strain DSM 16493 / NCIMB 14021 / DFL 12).